Here is a 486-residue protein sequence, read N- to C-terminus: Membrane-bound lytic murein transglycosylase F (486 aa).

Residues methionine 1–alanine 28 form the signal peptide. The interval glutamate 29–valine 267 is non-LT domain. Residues aspartate 268–leucine 486 are LT domain. The active site involves glutamate 314.

In the N-terminal section; belongs to the bacterial solute-binding protein 3 family. The protein in the C-terminal section; belongs to the transglycosylase Slt family.

It is found in the cell outer membrane. The enzyme catalyses Exolytic cleavage of the (1-&gt;4)-beta-glycosidic linkage between N-acetylmuramic acid (MurNAc) and N-acetylglucosamine (GlcNAc) residues in peptidoglycan, from either the reducing or the non-reducing ends of the peptidoglycan chains, with concomitant formation of a 1,6-anhydrobond in the MurNAc residue.. In terms of biological role, murein-degrading enzyme that degrades murein glycan strands and insoluble, high-molecular weight murein sacculi, with the concomitant formation of a 1,6-anhydromuramoyl product. Lytic transglycosylases (LTs) play an integral role in the metabolism of the peptidoglycan (PG) sacculus. Their lytic action creates space within the PG sacculus to allow for its expansion as well as for the insertion of various structures such as secretion systems and flagella. This is Membrane-bound lytic murein transglycosylase F from Stutzerimonas stutzeri (strain A1501) (Pseudomonas stutzeri).